A 173-amino-acid chain; its full sequence is Macro domain-containing protein in gbd 3'region (173 aa).

The Macro domain maps to 1–173 (MSGEHLQVVH…NYRLYRERLS (173 aa)).

The protein belongs to the MacroD-type family.

The chain is Macro domain-containing protein in gbd 3'region from Cupriavidus necator (Alcaligenes eutrophus).